The chain runs to 207 residues: Hemin/hemoglobin-binding protein 1 (207 aa).

Positions methionine 1–alanine 27 are cleaved as a signal peptide. An NEAT domain is found at leucine 29–leucine 148. Positions alanine 151–serine 178 are disordered. The span at serine 154–serine 178 shows a compositional bias: polar residues. The short motif at asparagine 174–serine 178 is the NPKXZ sorting signal element. Serine 177 carries the post-translational modification Murein peptidoglycan amidated serine. The propeptide at serine 178–lysine 207 is removed by sortase B.

It localises to the secreted. The protein localises to the cell wall. In terms of biological role, binds both host hemin and hemoglobin with affinity in the nanomolar range and presumably directs it to membrane transporters. In Listeria monocytogenes serovar 1/2a (strain ATCC BAA-679 / EGD-e), this protein is Hemin/hemoglobin-binding protein 1.